The following is a 343-amino-acid chain: Calcium/calmodulin-dependent protein kinase type 1B (343 aa).

The region spanning 15–270 (YEIREKLGSG…CQQALQHLWI (256 aa)) is the Protein kinase domain. ATP contacts are provided by residues 21–29 (LGSGAFSEV) and lysine 44. Aspartate 136 acts as the Proton acceptor in catalysis. Residues 290 to 311 (KNFARTHWKRAFNATSFLRHIR) are calmodulin-binding. The tract at residues 314-343 (GQSPEGEEASRQCMTRHSHPGLGTSQSPKW) is disordered. Residue serine 338 is modified to Phosphoserine.

It belongs to the protein kinase superfamily. CAMK Ser/Thr protein kinase family. CaMK subfamily. As to expression, expressed at highest levels in adult brain, and expressed in embryo. In the adult brain detected at high levels in the anterior olfactory nuclei, piriform cortex, septal nuclei, bed nuclei of the stria terminalis, hippocampal pyramidal cells, dentate granule cells, amygdala, hypothalamic nuclei, parabrachial nucleus, and nucleus of the solitary tract. Expressed at lower levels in adult ovary and heart and at very low levels in testis, lung and muscle.

The protein resides in the cytoplasm. The protein localises to the nucleus. The catalysed reaction is L-seryl-[protein] + ATP = O-phospho-L-seryl-[protein] + ADP + H(+). The enzyme catalyses L-threonyl-[protein] + ATP = O-phospho-L-threonyl-[protein] + ADP + H(+). With respect to regulation, activated by Ca(2+)/calmodulin. Calcium/calmodulin-dependent protein kinase belonging to a proposed calcium-triggered signaling cascade. In vitro phosphorylates CREB1 and SYN1/synapsin I. Phosphorylates and activates CAMK1. This is Calcium/calmodulin-dependent protein kinase type 1B (Pnck) from Mus musculus (Mouse).